The sequence spans 854 residues: Selenocysteine insertion sequence-binding protein 2 (854 aa).

Disordered regions lie at residues 332–351 (ADPK…DPSY), 356–394 (HIIH…KYEV), 417–445 (ERRD…KKSQ), and 488–619 (ECAS…PNHT). 2 stretches are compositionally biased toward polar residues: residues 338-350 (SIPS…SDPS) and 361-372 (TQKSKASQGSDL). The Nuclear localization signal signature appears at 380–387 (KNKKKKEK). Polar residues predominate over residues 426–445 (KFQSKQQPQDNFKNNVKKSQ). Residues 536 to 547 (ILKERQERKQRL) show a composition bias toward basic and acidic residues. Polar residues predominate over residues 548 to 559 (QENAVSPAFTSD). Over residues 560 to 572 (DTQDGESGGDDQF) the composition is skewed to acidic residues. Residues 593 to 611 (VEDKSEEPPGTELQRDTEA) show a composition bias toward basic and acidic residues. The RNA-binding stretch occupies residues 673–694 (LVLGLREVLKHLKLKKLKCVII). The tract at residues 787-812 (EPRPQAPPSLPTQGPSCPAEDGPPAL) is disordered.

As to expression, expressed at high levels in testis.

It localises to the nucleus. The protein localises to the mitochondrion. MRNA-binding protein that binds to the SECIS (selenocysteine insertion sequence) element present in the 3'-UTR of mRNAs encoding selenoproteins and facilitates the incorporation of the rare amino acid selenocysteine. Insertion of selenocysteine at UGA codons is mediated by SECISBP2 and EEFSEC: SECISBP2 (1) specifically binds the SECIS sequence once the 80S ribosome encounters an in-frame UGA codon and (2) contacts the RPS27A/eS31 of the 40S ribosome before ribosome stalling. (3) GTP-bound EEFSEC then delivers selenocysteinyl-tRNA(Sec) to the 80S ribosome and adopts a preaccommodated state conformation. (4) After GTP hydrolysis, EEFSEC dissociates from the assembly, selenocysteinyl-tRNA(Sec) accommodates, and peptide bond synthesis and selenoprotein elongation occur. The polypeptide is Selenocysteine insertion sequence-binding protein 2 (Homo sapiens (Human)).